The primary structure comprises 292 residues: Protoheme IX farnesyltransferase (292 aa).

Helical transmembrane passes span 13 to 33 (ILFG…QGSI), 35 to 55 (ILLL…GCVV), 84 to 104 (VALV…WFGV), 106 to 126 (GYAF…YSLW), 135 to 155 (TVIG…AVTH), 161 to 181 (ALLL…AIAI), 206 to 226 (IECV…YCFG), 231 to 251 (FFLI…IIGF), and 263 to 283 (FFLY…FTYQ).

The protein belongs to the UbiA prenyltransferase family. Protoheme IX farnesyltransferase subfamily.

The protein localises to the cell inner membrane. It catalyses the reaction heme b + (2E,6E)-farnesyl diphosphate + H2O = Fe(II)-heme o + diphosphate. The protein operates within porphyrin-containing compound metabolism; heme O biosynthesis; heme O from protoheme: step 1/1. In terms of biological role, converts heme B (protoheme IX) to heme O by substitution of the vinyl group on carbon 2 of heme B porphyrin ring with a hydroxyethyl farnesyl side group. The protein is Protoheme IX farnesyltransferase of Acinetobacter baumannii (strain AB307-0294).